The sequence spans 312 residues: MNIMKRQLCTSSKRFFSTAKNVVKYNTIQDIRNKYFTGTPLSMCTAYDFITATWVNKANCDLLLVGDSLAMTSLGYDSTITLSLNEFKYHVASVCRAEGSSMVVVDMPFGTFESGISDGLKNAIDIMKLDSKVTSVKVEVGSYTKDKYAMKFIEELCSRGIPVMAHIGLTPQKVHSLGGYKVQGSKSLLQMQELYETAMQLQKIGCWSILIECVPHKMAQFITSKLSVPTIGIGAGNGTSGQVLVISDLLGMQGDSVPKFVKQAVNMTDIATQGLKEYIASVEDRTFPERGTHTFKVKEDLWNEFLSSINEK.

It belongs to the PanB family.

It catalyses the reaction 3-methyl-2-oxobutanoate + (6R)-5,10-methylene-5,6,7,8-tetrahydrofolate + H2O = 2-dehydropantoate + (6S)-5,6,7,8-tetrahydrofolate. It functions in the pathway cofactor biosynthesis; (R)-pantothenate biosynthesis; (R)-pantoate from 3-methyl-2-oxobutanoate: step 1/2. Functionally, probable 3-methyl-2-oxobutanoate hydroxymethyltransferase required for pantothenic acid biosynthesis. Acts downstream in the pantothenic acid pathway. This is 3-methyl-2-oxobutanoate hydroxymethyltransferase from Saccharomyces cerevisiae (strain ATCC 204508 / S288c) (Baker's yeast).